The primary structure comprises 148 residues: Large ribosomal subunit protein uL15 (148 aa).

A disordered region spans residues 1-57 (MRLNDVKPQKGSKKRRRRVGRGISAGQGASAGLGMRGQKSRSGSGTRPGFEGGQQPL). The span at 10 to 20 (KGSKKRRRRVG) shows a compositional bias: basic residues. Positions 23–35 (ISAGQGASAGLGM) are enriched in gly residues.

This sequence belongs to the universal ribosomal protein uL15 family. In terms of assembly, part of the 50S ribosomal subunit.

Binds to the 23S rRNA. In Trichormus variabilis (strain ATCC 29413 / PCC 7937) (Anabaena variabilis), this protein is Large ribosomal subunit protein uL15.